Consider the following 187-residue polypeptide: Elongation factor P (187 aa).

The protein belongs to the elongation factor P family.

It is found in the cytoplasm. Its pathway is protein biosynthesis; polypeptide chain elongation. Involved in peptide bond synthesis. Stimulates efficient translation and peptide-bond synthesis on native or reconstituted 70S ribosomes in vitro. Probably functions indirectly by altering the affinity of the ribosome for aminoacyl-tRNA, thus increasing their reactivity as acceptors for peptidyl transferase. The chain is Elongation factor P from Corynebacterium aurimucosum (strain ATCC 700975 / DSM 44827 / CIP 107346 / CN-1) (Corynebacterium nigricans).